The chain runs to 191 residues: uncharacterized protein (191 aa).

This sequence to E.coli YecM.

This is an uncharacterized protein from Haemophilus influenzae (strain ATCC 51907 / DSM 11121 / KW20 / Rd).